Here is a 340-residue protein sequence, read N- to C-terminus: MKSTFAALLIMVGCLVSGALLTGSEAAAAQPVTLNYANFPPASTFPCIQMEQWAHEVRTRTRGKVDVLTYPGGTLLGARNMLRGVMSGQADIGCISLAYHPGVFPVMSVFELPLGFTSAEAASSVLWELYSGLRPAELERVKVLTMFTSAPSHFMTVTPVRSLRDLQGMEIRGAGTLSAILEKLGATPVSMPMPEVPEAVQKGIIKGLFTSLDVMKDMNFAEMTGHVTRADQAVYPFAVIMNREAWERLSPDVQQVLDGLAAEHAAWTGRYLDAHVQDSMRWAEEKHGVQVHTLPEEDIAAMRRSVQPLFDAWAQRAADKGADPDAVMRTVDALKAQYGG.

Positions 1–29 (MKSTFAALLIMVGCLVSGALLTGSEAAAA) are cleaved as a signal peptide. (indol-3-yl)acetate contacts are provided by residues Y99, R172, 210–213 (TSLD), and Y235.

It belongs to the bacterial solute-binding protein 7 family. In terms of assembly, the complex is comprised of an extracytoplasmic solute-binding protein and a heteromeric permease formed by two transmembrane proteins.

The protein localises to the periplasm. In terms of biological role, solute-binding protein that binds indole-3-pyruvate and indole-3-acetate (in vitro). Can also bind D-tryptophan (in vitro), but that is probably not a physiological ligand. Probably part of a tripartite ATP-independent periplasmic (TRAP) transport system that mediates solute transport into the cytoplasm. This is Solute-binding protein Dde_0634 from Oleidesulfovibrio alaskensis (strain ATCC BAA-1058 / DSM 17464 / G20) (Desulfovibrio alaskensis).